The chain runs to 358 residues: 3-dehydroquinate synthase (358 aa).

NAD(+) is bound by residues 102-106, 126-127, K138, and K147; these read GVVGD and TT. Positions 180, 243, and 260 each coordinate Zn(2+).

It belongs to the sugar phosphate cyclases superfamily. Dehydroquinate synthase family. Co(2+) is required as a cofactor. The cofactor is Zn(2+). NAD(+) serves as cofactor.

Its subcellular location is the cytoplasm. It catalyses the reaction 7-phospho-2-dehydro-3-deoxy-D-arabino-heptonate = 3-dehydroquinate + phosphate. The protein operates within metabolic intermediate biosynthesis; chorismate biosynthesis; chorismate from D-erythrose 4-phosphate and phosphoenolpyruvate: step 2/7. Its function is as follows. Catalyzes the conversion of 3-deoxy-D-arabino-heptulosonate 7-phosphate (DAHP) to dehydroquinate (DHQ). This Shouchella clausii (strain KSM-K16) (Alkalihalobacillus clausii) protein is 3-dehydroquinate synthase.